The sequence spans 98 residues: Integration host factor subunit beta (98 aa).

Belongs to the bacterial histone-like protein family. In terms of assembly, heterodimer of an alpha and a beta chain.

In terms of biological role, this protein is one of the two subunits of integration host factor, a specific DNA-binding protein that functions in genetic recombination as well as in transcriptional and translational control. The sequence is that of Integration host factor subunit beta from Hahella chejuensis (strain KCTC 2396).